A 72-amino-acid polypeptide reads, in one-letter code: Translation initiation factor IF-1 (72 aa).

The region spanning 2 to 72 (AKEDVIEVEG…TRGRITYRYK (71 aa)) is the S1-like domain. At tyrosine 60 the chain carries Phosphotyrosine.

It belongs to the IF-1 family. In terms of assembly, component of the 30S ribosomal translation pre-initiation complex which assembles on the 30S ribosome in the order IF-2 and IF-3, IF-1 and N-formylmethionyl-tRNA(fMet); mRNA recruitment can occur at any time during PIC assembly.

Its subcellular location is the cytoplasm. Its function is as follows. One of the essential components for the initiation of protein synthesis. Stabilizes the binding of IF-2 and IF-3 on the 30S subunit to which N-formylmethionyl-tRNA(fMet) subsequently binds. Helps modulate mRNA selection, yielding the 30S pre-initiation complex (PIC). Upon addition of the 50S ribosomal subunit IF-1, IF-2 and IF-3 are released leaving the mature 70S translation initiation complex. This Halalkalibacterium halodurans (strain ATCC BAA-125 / DSM 18197 / FERM 7344 / JCM 9153 / C-125) (Bacillus halodurans) protein is Translation initiation factor IF-1.